The following is a 317-amino-acid chain: Thiamine thiazole synthase (317 aa).

Residues Cys78, Glu99–Ala100, Gly107, and Val172 contribute to the substrate site. 2,3-didehydroalanine (Cys) is present on Cys206. Residues Asp208, His223, Met275, and Arg285–Gly287 each bind substrate.

The protein belongs to the THI4 family. Homooctamer. Fe cation is required as a cofactor. Post-translationally, during the catalytic reaction, a sulfide is transferred from Cys-206 to a reaction intermediate, generating a dehydroalanine residue.

Its subcellular location is the cytoplasm. The protein resides in the nucleus. The enzyme catalyses [ADP-thiazole synthase]-L-cysteine + glycine + NAD(+) = [ADP-thiazole synthase]-dehydroalanine + ADP-5-ethyl-4-methylthiazole-2-carboxylate + nicotinamide + 3 H2O + 2 H(+). Involved in biosynthesis of the thiamine precursor thiazole. Catalyzes the conversion of NAD and glycine to adenosine diphosphate 5-(2-hydroxyethyl)-4-methylthiazole-2-carboxylic acid (ADT), an adenylated thiazole intermediate. The reaction includes an iron-dependent sulfide transfer from a conserved cysteine residue of the protein to a thiazole intermediate. The enzyme can only undergo a single turnover, which suggests it is a suicide enzyme. May have additional roles in adaptation to various stress conditions and in DNA damage tolerance. The polypeptide is Thiamine thiazole synthase (Yarrowia lipolytica (strain CLIB 122 / E 150) (Yeast)).